Reading from the N-terminus, the 548-residue chain is Membrane protein insertase YidC (548 aa).

The chain crosses the membrane as a helical span at residues 6-26 (NLLVIALLFVSFMIWQAWEQD). Positions 28 to 56 (NPQPQTQQTTQTTTTAAGSAADQGVPASG) are disordered. A compositionally biased stretch (low complexity) spans 29 to 42 (PQPQTQQTTQTTTT). 4 helical membrane-spanning segments follow: residues 350-370 (FVGN…GIMY), 424-444 (FPLI…MGSI), 458-478 (LSAQ…MFFI), and 499-519 (PVIF…YYIV).

The protein belongs to the OXA1/ALB3/YidC family. Type 1 subfamily. In terms of assembly, interacts with the Sec translocase complex via SecD. Specifically interacts with transmembrane segments of nascent integral membrane proteins during membrane integration.

The protein resides in the cell inner membrane. Its function is as follows. Required for the insertion and/or proper folding and/or complex formation of integral membrane proteins into the membrane. Involved in integration of membrane proteins that insert both dependently and independently of the Sec translocase complex, as well as at least some lipoproteins. Aids folding of multispanning membrane proteins. This Salmonella heidelberg (strain SL476) protein is Membrane protein insertase YidC.